The following is a 793-amino-acid chain: Short transient receptor potential channel 1 (793 aa).

The interval 1 to 30 (MMAALYPSTDLSGVSSSSLPSSPSSSSPNE) is disordered. At 1 to 345 (MMAALYPSTD…FGQMSGYRRK (345 aa)) the chain is on the cytoplasmic side. A compositionally biased stretch (low complexity) spans 15-28 (SSSSLPSSPSSSSP). ANK repeat units follow at residues 46 to 75 (LNEK…SGDL), 83 to 109 (LGRN…YGCQ), 111 to 156 (ADAL…EYST), and 158 to 180 (MDVA…MLLK). Residues histidine 189, cysteine 193, cysteine 195, and cysteine 198 each contribute to the Zn(2+) site. The segment at residues 346 to 379 (PTCKKIMTVLTVGIFWPVLSLCYLIAPKSQFGRI) is an intramembrane region (discontinuously helical). The Cytoplasmic portion of the chain corresponds to 380–386 (IHTPFMK). Residues 387–404 (FIIHGASYFTFLLLLNLY) traverse the membrane as a helical segment. Over 405–422 (SLVYNEDKKNTMGPALER) the chain is Extracellular. The helical transmembrane segment at 423 to 439 (IDYLLILWIIGMIWSDI) threads the bilayer. The Cytoplasmic segment spans residues 440-455 (KRLWYEGLEDFLEESR). A helical transmembrane segment spans residues 456–475 (NQLSFVMNSLYLATFALKVV). Residues 476-496 (AHNKFHDFADRKDWDAFHPTL) lie on the Extracellular side of the membrane. A helical transmembrane segment spans residues 497 to 517 (VAEGLFAFANVLSYLRLFFMY). Topologically, residues 518-536 (TTSSILGPLQISMGQMLQD) are cytoplasmic. The helical transmembrane segment at 537–558 (FGKFLGMFLLVLFSFTIGLTQL) threads the bilayer. Over 559-623 (YDKGYTSKEQ…GEELQSFVGA (65 aa)) the chain is Extracellular. A disulfide bridge connects residues cysteine 571 and cysteine 576. Residues 624 to 644 (VIVGTYNVVVVIVLTKLLVAM) traverse the membrane as a helical segment. Topologically, residues 645–793 (LHKSFQLIAN…SKYAMFYPRN (149 aa)) are cytoplasmic.

Belongs to the transient receptor (TC 1.A.4) family. STrpC subfamily. TRPC1 sub-subfamily. In terms of assembly, heterotetramer with TRPC4 and/or TRPC5. Forms a heteromeric ion channel with TRPC4, with a 1:3 TRPC1:TRPC4 stoichiometry. Unlike other TRP channel proteins, does not form a homomeric channel. Interacts with TRPC4AP. Interacts with ITPR3. Interacts with MX1 and RNF24. Interacts with FKBP4. Interacts with PLSCR1. Interacts with PKD2L2. Forms a heterotetramer with PKD2 with a 2:2 stoichiometry; has distinct channel properties separate from PKD2 or TRPC1 homomers alone. Activation of PRKCA induces phosphorylation of TRPC1 and subsequent Ca2+ entry into cells.

It is found in the cell membrane. The catalysed reaction is Ca(2+)(in) = Ca(2+)(out). It carries out the reaction Na(+)(in) = Na(+)(out). The enzyme catalyses Li(+)(in) = Li(+)(out). It catalyses the reaction Cs(+)(in) = Cs(+)(out). Its activity is regulated as follows. May be operated by a phosphatidylinositol second messenger system activated by receptor tyrosine kinases or G-protein coupled receptors. Also activated by intracellular calcium store depletion. Its function is as follows. Forms a receptor-activated non-selective calcium permeant cation channel. Forms a heteromeric ion channel with TRPC4 or TRPC5 that has reduced calcium permeability compared to the homomeric TRPC4 or TRPC5 channel. Also permeable to monovalent ions including sodium, lithium and cesium ions. The polypeptide is Short transient receptor potential channel 1 (Trpc1) (Mus musculus (Mouse)).